Reading from the N-terminus, the 331-residue chain is Beta-ketoacyl-[acyl-carrier-protein] synthase III (331 aa).

Active-site residues include cysteine 113 and histidine 253. Residues 254 to 258 (QANTR) are ACP-binding. Asparagine 283 is a catalytic residue.

The protein belongs to the thiolase-like superfamily. FabH family. Homodimer.

Its subcellular location is the cytoplasm. The enzyme catalyses malonyl-[ACP] + acetyl-CoA + H(+) = 3-oxobutanoyl-[ACP] + CO2 + CoA. Its pathway is lipid metabolism; fatty acid biosynthesis. Functionally, catalyzes the condensation reaction of fatty acid synthesis by the addition to an acyl acceptor of two carbons from malonyl-ACP. Catalyzes the first condensation reaction which initiates fatty acid synthesis and may therefore play a role in governing the total rate of fatty acid production. Possesses both acetoacetyl-ACP synthase and acetyl transacylase activities. Its substrate specificity determines the biosynthesis of branched-chain and/or straight-chain of fatty acids. In Desulfitobacterium hafniense (strain DSM 10664 / DCB-2), this protein is Beta-ketoacyl-[acyl-carrier-protein] synthase III.